A 156-amino-acid chain; its full sequence is MGKIRLMHAKLHRVRVTEANVGYIGSITIDPQLLDRVGILPLEEVDIVNLNNGKRFSTYVFPGEAGTGEVCPNGGAALLCQPGDLLIIYAYEERDRSEVLQQGHHARVIVADENNQIKQFFHQTLIPTEEGKGVSFHSDEIILNGQPKNNPILSEN.

Residue Ser-26 is the Schiff-base intermediate with substrate; via pyruvic acid of the active site. Pyruvic acid (Ser) is present on Ser-26. Thr-58 serves as a coordination point for substrate. Tyr-59 serves as the catalytic Proton donor. A substrate-binding site is contributed by 74–76 (GGA).

It belongs to the PanD family. In terms of assembly, heterooctamer of four alpha and four beta subunits. Requires pyruvate as cofactor. Post-translationally, is synthesized initially as an inactive proenzyme, which is activated by self-cleavage at a specific serine bond to produce a beta-subunit with a hydroxyl group at its C-terminus and an alpha-subunit with a pyruvoyl group at its N-terminus.

It localises to the cytoplasm. The enzyme catalyses L-aspartate + H(+) = beta-alanine + CO2. It functions in the pathway cofactor biosynthesis; (R)-pantothenate biosynthesis; beta-alanine from L-aspartate: step 1/1. Catalyzes the pyruvoyl-dependent decarboxylation of aspartate to produce beta-alanine. This Gloeothece citriformis (strain PCC 7424) (Cyanothece sp. (strain PCC 7424)) protein is Aspartate 1-decarboxylase.